The sequence spans 433 residues: ATP-dependent protease ATPase subunit HslU (433 aa).

ATP is bound by residues Ile18, 60-65, Asp246, Glu311, and Arg383; that span reads GVGKTE.

The protein belongs to the ClpX chaperone family. HslU subfamily. As to quaternary structure, a double ring-shaped homohexamer of HslV is capped on each side by a ring-shaped HslU homohexamer. The assembly of the HslU/HslV complex is dependent on binding of ATP.

The protein localises to the cytoplasm. In terms of biological role, ATPase subunit of a proteasome-like degradation complex; this subunit has chaperone activity. The binding of ATP and its subsequent hydrolysis by HslU are essential for unfolding of protein substrates subsequently hydrolyzed by HslV. HslU recognizes the N-terminal part of its protein substrates and unfolds these before they are guided to HslV for hydrolysis. This Cereibacter sphaeroides (strain KD131 / KCTC 12085) (Rhodobacter sphaeroides) protein is ATP-dependent protease ATPase subunit HslU.